Reading from the N-terminus, the 657-residue chain is MPRALEPAEPILSAEGIPYSPRYDDVYHSTEGGLAQAAHVFLGGNGLPQAWAGQRQFVIVETGFGLGLNFLATWQAWRADPQRCGTLHFVSIEKHPFTREGLAQLHAGLDGLQPLAQALQAQWPLALPGLHRLAFDGGRVVLTLALGDIEQMLPRLAAGADAFYLDGFAPARNTEMWSPQVFRGLARLARPGARLATWAAAGFVRRGLKEVGFEVSRAPGFGGKWQMTVASFRPQWKARRHAPPLPAQWAERHAIVIGAGLAGCAVTERLAARGWRVTLFDGHDGPARQTSAHRAAAMHAHLSADDSLLSRLSRTGNQYALRAWAELAEAGHAVGWHGCGVLQIGEDEAEGEAQRAALAAMRLPEGFVRWMSAEEAAAAHHAGVPRGGLWFPQGGWVAPPDICSAQLAQAGAAVTARFGCRVAAIARVDGQWQALGQDGEVLASAPVLVLANAHEAQQLLPQQHWTMRRVRGQLTTLASAQVDALGGWPDCVVTGAGYLLPRTADGAGRVGSSYDADEGPLVEQPAVHAANLARLSGMLPRQADAVAAIDPATLSGYVGVRTVTHNRLPLVGQVPDEAAALAQAASLRGAHLRDLPRMPGLYAALAYGSRGLTWAALGAELLASQIEGEPLPLESDLADAMDPARLLLRALRHGHTG.

Residues 1–233 form a tRNA (mnm(5)s(2)U34)-methyltransferase region; sequence MPRALEPAEP…KWQMTVASFR (233 aa). The interval 257–657 is FAD-dependent cmnm(5)s(2)U34 oxidoreductase; it reads IGAGLAGCAV…LRALRHGHTG (401 aa).

It in the N-terminal section; belongs to the methyltransferase superfamily. tRNA (mnm(5)s(2)U34)-methyltransferase family. In the C-terminal section; belongs to the DAO family. It depends on FAD as a cofactor.

The protein localises to the cytoplasm. The enzyme catalyses 5-aminomethyl-2-thiouridine(34) in tRNA + S-adenosyl-L-methionine = 5-methylaminomethyl-2-thiouridine(34) in tRNA + S-adenosyl-L-homocysteine + H(+). In terms of biological role, catalyzes the last two steps in the biosynthesis of 5-methylaminomethyl-2-thiouridine (mnm(5)s(2)U) at the wobble position (U34) in tRNA. Catalyzes the FAD-dependent demodification of cmnm(5)s(2)U34 to nm(5)s(2)U34, followed by the transfer of a methyl group from S-adenosyl-L-methionine to nm(5)s(2)U34, to form mnm(5)s(2)U34. The polypeptide is tRNA 5-methylaminomethyl-2-thiouridine biosynthesis bifunctional protein MnmC (Cupriavidus necator (strain ATCC 17699 / DSM 428 / KCTC 22496 / NCIMB 10442 / H16 / Stanier 337) (Ralstonia eutropha)).